We begin with the raw amino-acid sequence, 90 residues long: NELL2-interacting cell ontogeny regulator 1 (90 aa).

Residues 1–26 (MVSSGYLQAVMLLLAVQLLCFRPSDA) form the signal peptide.

It belongs to the NICOL family.

It localises to the secreted. MRNA-binding protein which interacts with a range of target mRNAs and may promote extracellular matrix production. The chain is NELL2-interacting cell ontogeny regulator 1 from Salmo salar (Atlantic salmon).